The following is a 275-amino-acid chain: 4-hydroxy-tetrahydrodipicolinate reductase (275 aa).

NAD(+) contacts are provided by residues 13–18 (GAAGKM) and 108–110 (GTT). The active-site Proton donor/acceptor is the H164. H165 lines the (S)-2,3,4,5-tetrahydrodipicolinate pocket. K168 functions as the Proton donor in the catalytic mechanism. 174-175 (GT) provides a ligand contact to (S)-2,3,4,5-tetrahydrodipicolinate.

It belongs to the DapB family.

It localises to the cytoplasm. It catalyses the reaction (S)-2,3,4,5-tetrahydrodipicolinate + NAD(+) + H2O = (2S,4S)-4-hydroxy-2,3,4,5-tetrahydrodipicolinate + NADH + H(+). The enzyme catalyses (S)-2,3,4,5-tetrahydrodipicolinate + NADP(+) + H2O = (2S,4S)-4-hydroxy-2,3,4,5-tetrahydrodipicolinate + NADPH + H(+). It participates in amino-acid biosynthesis; L-lysine biosynthesis via DAP pathway; (S)-tetrahydrodipicolinate from L-aspartate: step 4/4. Catalyzes the conversion of 4-hydroxy-tetrahydrodipicolinate (HTPA) to tetrahydrodipicolinate. The protein is 4-hydroxy-tetrahydrodipicolinate reductase of Cyanothece sp. (strain PCC 7425 / ATCC 29141).